A 527-amino-acid polypeptide reads, in one-letter code: Type 2 DNA topoisomerase 6 subunit B (527 aa).

ATP-binding positions include N39, D73, 94 to 95 (SK), 103 to 110 (GVFGLGLK), and K421.

This sequence belongs to the TOP6B family. In terms of assembly, homodimer. Heterotetramer of two Top6A and two Top6B chains.

The enzyme catalyses ATP-dependent breakage, passage and rejoining of double-stranded DNA.. Functionally, relaxes both positive and negative superturns and exhibits a strong decatenase activity. The protein is Type 2 DNA topoisomerase 6 subunit B of Pyrobaculum aerophilum (strain ATCC 51768 / DSM 7523 / JCM 9630 / CIP 104966 / NBRC 100827 / IM2).